The sequence spans 608 residues: MKWLKQLQSLHTKLVIVYVLLIIIGMQIIGLYFTNNLEKELLDNFKKNITQYAKQLEISIEKVYDEKGSVNAQKDIQNLLSEYANRQEIGEIRFIDKDQIIIATTKQSNRSLINQKANDSSVQKALSLGQSNDHLILKDYGGGKDRVWVYNIPVKVDKKVIGNIYIESKINDVYNQLNNINQIFIVGTAISLLITVILGFFIARTITKPITDMRNQTVEMSRGNYTQRVKIYGNDEIGELALAFNNLSKRVQEAQANTESEKRRLDSVITHMSDGIIATDRRGRIRIVNDMALKMLGMAKEDIIGYYMLSVLSLEDEFKLEEIQENNDSFLLDLNEEEGLIARVNFSTIVQETGFVTGYIAVLHDVTEQQQVERERREFVANVSHELRTPLTSMNSYIEALEEGAWKDEELAPQFLSVTREETERMIRLVNDLLQLSKMDNESDQINKEIIDFNMFINKIINRHEMSTKDTTFIRDIPKKTIFTEFDPDKMTQVFDNVITNAMKYSRGDKRVEFHVKQNPLYNRMTIRIKDNGIGIPINKVDKIFDRFYRVDKARTRKMGGTGLGLAISKEIVEAHNGRIWANSVEGQGTSIFITLPCEVIEDGDWDE.

The next 2 membrane-spanning stretches (helical) occupy residues 14–34 (LVIV…LYFT) and 183–203 (IFIV…FFIA). An HAMP domain is found at 204–256 (RTITKPITDMRNQTVEMSRGNYTQRVKIYGNDEIGELALAFNNLSKRVQEAQA). The PAS domain maps to 261-331 (EKRRLDSVIT…EIQENNDSFL (71 aa)). Zn(2+) is bound by residues H271, D274, H364, and E368. One can recognise a PAC domain in the interval 314-378 (LEDEFKLEEI…QQQVERERRE (65 aa)). In terms of domain architecture, Histidine kinase spans 382-600 (NVSHELRTPL…SIFITLPCEV (219 aa)). Residue H385 is modified to Phosphohistidine; by autocatalysis.

As to quaternary structure, forms homodimers. Forms homooligomers. Autophosphorylated.

Its subcellular location is the cell membrane. The enzyme catalyses ATP + protein L-histidine = ADP + protein N-phospho-L-histidine.. By zinc. Zinc-binding negatively regulates WalK kinase activity and thus autophosphorylation. Member of the two-component regulatory system WalK/WalR that regulates genes involved in cell wall metabolism, virulence regulation, biofilm production, oxidative stress resistance and antibiotic resistance via direct or indirect regulation of autolysins. Functions as a sensor protein kinase which is autophosphorylated at a histidine residue in the dimerization domain and transfers its phosphate group to the conserved aspartic acid residue in the regulatory domain of WalR. In turn, WalR binds to the upstream promoter regions of the target genes to positively and negatively regulate their expression. In Staphylococcus aureus (strain MRSA252), this protein is Sensor protein kinase WalK (walK).